A 233-amino-acid polypeptide reads, in one-letter code: Large ribosomal subunit protein uL1 (233 aa).

Belongs to the universal ribosomal protein uL1 family. As to quaternary structure, part of the 50S ribosomal subunit.

Binds directly to 23S rRNA. The L1 stalk is quite mobile in the ribosome, and is involved in E site tRNA release. Functionally, protein L1 is also a translational repressor protein, it controls the translation of the L11 operon by binding to its mRNA. This Shewanella amazonensis (strain ATCC BAA-1098 / SB2B) protein is Large ribosomal subunit protein uL1.